The sequence spans 660 residues: Bifunctional polymyxin resistance protein ArnA (660 aa).

Positions 1–304 are formyltransferase ArnAFT; sequence MKAVVFAYHD…TLGLVEGSRL (304 aa). Residue H104 is the Proton donor; for formyltransferase activity of the active site. Residues R114 and 136–140 contribute to the (6R)-10-formyltetrahydrofolate site; that span reads VAKAD. The interval 314 to 660 is dehydrogenase ArnADH; it reads RRTRVLILGV…RTVDIVEKSS (347 aa). Residues D347 and 368-369 contribute to the NAD(+) site; that span reads DI. Residues A393, Y398, and 432–433 each bind UDP-alpha-D-glucuronate; that span reads TS. E434 (proton acceptor; for decarboxylase activity) is an active-site residue. Residues R460, N492, 526–535, and Y613 each bind UDP-alpha-D-glucuronate; that span reads KLIDGGKQKR. R619 serves as the catalytic Proton donor; for decarboxylase activity.

This sequence in the N-terminal section; belongs to the Fmt family. UDP-L-Ara4N formyltransferase subfamily. In the C-terminal section; belongs to the NAD(P)-dependent epimerase/dehydratase family. UDP-glucuronic acid decarboxylase subfamily. As to quaternary structure, homohexamer, formed by a dimer of trimers.

The catalysed reaction is UDP-alpha-D-glucuronate + NAD(+) = UDP-beta-L-threo-pentopyranos-4-ulose + CO2 + NADH. It carries out the reaction UDP-4-amino-4-deoxy-beta-L-arabinose + (6R)-10-formyltetrahydrofolate = UDP-4-deoxy-4-formamido-beta-L-arabinose + (6S)-5,6,7,8-tetrahydrofolate + H(+). It functions in the pathway nucleotide-sugar biosynthesis; UDP-4-deoxy-4-formamido-beta-L-arabinose biosynthesis; UDP-4-deoxy-4-formamido-beta-L-arabinose from UDP-alpha-D-glucuronate: step 1/3. Its pathway is nucleotide-sugar biosynthesis; UDP-4-deoxy-4-formamido-beta-L-arabinose biosynthesis; UDP-4-deoxy-4-formamido-beta-L-arabinose from UDP-alpha-D-glucuronate: step 3/3. It participates in bacterial outer membrane biogenesis; lipopolysaccharide biosynthesis. Bifunctional enzyme that catalyzes the oxidative decarboxylation of UDP-glucuronic acid (UDP-GlcUA) to UDP-4-keto-arabinose (UDP-Ara4O) and the addition of a formyl group to UDP-4-amino-4-deoxy-L-arabinose (UDP-L-Ara4N) to form UDP-L-4-formamido-arabinose (UDP-L-Ara4FN). The modified arabinose is attached to lipid A and is required for resistance to polymyxin and cationic antimicrobial peptides. In Escherichia fergusonii (strain ATCC 35469 / DSM 13698 / CCUG 18766 / IAM 14443 / JCM 21226 / LMG 7866 / NBRC 102419 / NCTC 12128 / CDC 0568-73), this protein is Bifunctional polymyxin resistance protein ArnA.